The following is a 194-amino-acid chain: Ion-translocating oxidoreductase complex subunit A (194 aa).

The next 6 membrane-spanning stretches (helical) occupy residues 4-24 (LVLI…QFLG), 39-59 (IGLS…SYLV), 71-91 (FLRT…TEMV), 102-122 (VLGI…VALL), 131-151 (FITA…VLVL), and 172-192 (AIGM…AGLI).

The protein belongs to the NqrDE/RnfAE family. As to quaternary structure, the complex is composed of six subunits: RnfA, RnfB, RnfC, RnfD, RnfE and RnfG.

The protein resides in the cell inner membrane. Part of a membrane-bound complex that couples electron transfer with translocation of ions across the membrane. The polypeptide is Ion-translocating oxidoreductase complex subunit A (Ectopseudomonas mendocina (strain ymp) (Pseudomonas mendocina)).